Here is a 546-residue protein sequence, read N- to C-terminus: Thermolysin (546 aa).

The signal sequence occupies residues 1–25; it reads MDKRAMLGAIGLAFGLMAWPFGASA. A propeptide spans 26 to 228 (activation peptide); sequence KEKSMVWNEQ…EAKPGGGQPV (203 aa). Aspartate 287, aspartate 289, glutamine 291, and aspartate 368 together coordinate Ca(2+). Histidine 372 serves as a coordination point for Zn(2+). The active site involves glutamate 373. Residues histidine 376 and glutamate 396 each contribute to the Zn(2+) site. Residues asparagine 413, aspartate 415, glutamate 417, glutamate 420, tyrosine 423, threonine 424, isoleucine 427, and aspartate 430 each contribute to the Ca(2+) site. Histidine 461 functions as the Proton donor in the catalytic mechanism.

Belongs to the peptidase M4 family. The cofactor is Ca(2+). Zn(2+) is required as a cofactor.

It is found in the secreted. It carries out the reaction Preferential cleavage: Xaa-|-Leu &gt; Xaa-|-Phe.. In terms of biological role, extracellular zinc metalloprotease. This Bacillus caldolyticus protein is Thermolysin (npr).